Reading from the N-terminus, the 69-residue chain is Large ribosomal subunit protein uL29 (69 aa).

This sequence belongs to the universal ribosomal protein uL29 family.

This chain is Large ribosomal subunit protein uL29, found in Natronomonas pharaonis (strain ATCC 35678 / DSM 2160 / CIP 103997 / JCM 8858 / NBRC 14720 / NCIMB 2260 / Gabara) (Halobacterium pharaonis).